A 569-amino-acid polypeptide reads, in one-letter code: Sulfite reductase [NADPH] hemoprotein beta-component (569 aa).

Positions 433, 439, 478, and 482 each coordinate [4Fe-4S] cluster. Cysteine 482 contacts siroheme.

This sequence belongs to the nitrite and sulfite reductase 4Fe-4S domain family. As to quaternary structure, alpha(8)-beta(8). The alpha component is a flavoprotein, the beta component is a hemoprotein. The cofactor is siroheme. [4Fe-4S] cluster is required as a cofactor.

It carries out the reaction hydrogen sulfide + 3 NADP(+) + 3 H2O = sulfite + 3 NADPH + 4 H(+). The protein operates within sulfur metabolism; hydrogen sulfide biosynthesis; hydrogen sulfide from sulfite (NADPH route): step 1/1. Component of the sulfite reductase complex that catalyzes the 6-electron reduction of sulfite to sulfide. This is one of several activities required for the biosynthesis of L-cysteine from sulfate. The sequence is that of Sulfite reductase [NADPH] hemoprotein beta-component from Buchnera aphidicola subsp. Acyrthosiphon pisum (strain 5A).